A 374-amino-acid chain; its full sequence is Amino acid binding protein (374 aa).

A signal peptide spans 1–27 (MSKKLFRKGILALAVSSVMGLSTHALA).

The protein belongs to the leucine-binding protein family.

It is found in the periplasm. Functionally, binds primarily proteinogenic amino acids. The chain is Amino acid binding protein from Pseudomonas aeruginosa (strain ATCC 15692 / DSM 22644 / CIP 104116 / JCM 14847 / LMG 12228 / 1C / PRS 101 / PAO1).